The chain runs to 465 residues: Monocarboxylate transporter 4 (465 aa).

The Cytoplasmic portion of the chain corresponds to 2-17 (GGAVVDEGPTGVKAPD). A helical membrane pass occupies residues 18-38 (GGWGWAVLFGCFVITGFSYAF). Over 39–61 (PKAVSVFFKELIQEFGIGYSDTA) the chain is Extracellular. A helical transmembrane segment spans residues 62-82 (WISSILLAMLYGTGPLCSVCV). Residues 83 to 84 (NR) lie on the Cytoplasmic side of the membrane. Residues 85–105 (FGCRPVMLVGGLFASLGMVAA) form a helical membrane-spanning segment. Topologically, residues 106–109 (SFCR) are extracellular. Residues 110–130 (SIIQVYLTTGVITGLGLALNF) traverse the membrane as a helical segment. At 131-149 (QPSLIMLNRYFSKRRPMAN) the chain is on the cytoplasmic side. Residues 150–170 (GLAAAGSPVFLCALSPLGQLL) traverse the membrane as a helical segment. At 171-179 (QDRYGWRGG) the chain is on the extracellular side. A helical membrane pass occupies residues 180-200 (FLILGGLLLNCCVCAALMRPL). Over 201–227 (VVTAQPGSGPPRPSRRLLDLSVFRDRG) the chain is Cytoplasmic. The chain crosses the membrane as a helical span at residues 228–248 (FVLYAVAASVMVLGLFVPPVF). Residues 249–264 (VVSYAKDLGVPDTKAA) are Extracellular-facing. The helical transmembrane segment at 265–285 (FLLTILGFIDIFARPAAGFVA) threads the bilayer. Topologically, residues 286-294 (GLGKVRPYS) are cytoplasmic. A helical transmembrane segment spans residues 295–315 (VYLFSFSMFFNGLADLAGSTA). The Extracellular segment spans residues 316–317 (GD). Residues 318 to 338 (YGGLVVFCIFFGISYGMVGAL) traverse the membrane as a helical segment. Residues 339-351 (QFEVLMAIVGTHK) lie on the Cytoplasmic side of the membrane. A helical membrane pass occupies residues 352-372 (FSSAIGLVLLMEAVAVLVGPP). The Extracellular segment spans residues 373–384 (SGGKLLDATHVY). Residues 385–405 (MYVFILAGAEVLTSSLILLLG) form a helical membrane-spanning segment. The Cytoplasmic portion of the chain corresponds to 406–465 (NFFCIRKKPKEPQPEVAAAEEEKLHKPPADSGVDLREVEHFLKAEPEKNGEVVHTPETSV). The tract at residues 419 to 438 (PEVAAAEEEKLHKPPADSGV) is disordered. 2 basolateral sorting signal regions span residues 423-441 (AAEEEKLHKPPADSGVDLR) and 441-465 (REVEHFLKAEPEKNGEVVHTPETSV). Basic and acidic residues predominate over residues 425–438 (EEEKLHKPPADSGV). Phosphoserine is present on Ser436. Thr460 carries the post-translational modification Phosphothreonine. Residue Ser464 is modified to Phosphoserine.

Belongs to the major facilitator superfamily. Monocarboxylate porter (TC 2.A.1.13) family. In terms of assembly, interacts with BSG; interaction mediates SLC16A3 targeting to the plasma membrane. Highly expressed in skeletal muscle.

It is found in the cell membrane. Its subcellular location is the basolateral cell membrane. It catalyses the reaction (S)-lactate(in) + H(+)(in) = (S)-lactate(out) + H(+)(out). The enzyme catalyses pyruvate(out) + H(+)(out) = pyruvate(in) + H(+)(in). In terms of biological role, proton-dependent transporter of monocarboxylates such as L-lactate and pyruvate. Plays a predominant role in L-lactate efflux from highly glycolytic cells. The polypeptide is Monocarboxylate transporter 4 (SLC16A3) (Homo sapiens (Human)).